A 174-amino-acid chain; its full sequence is Adipose-secreted signaling protein (174 aa).

Ala-2 bears the N-acetylalanine mark. Residue Thr-147 is modified to Phosphothreonine.

The protein belongs to the ADISSP family. In terms of tissue distribution, expression is adipose-specific and highly brown adipose tissue-enriched.

It is found in the secreted. Adipocyte-secreted protein (adipokine) that acts as a key regulator for white adipose tissue (WAT) thermogenesis and glucose homeostasis at least in part through activation of protein kinase A (PKA). The polypeptide is Adipose-secreted signaling protein (Mus musculus (Mouse)).